The primary structure comprises 133 residues: Large-conductance mechanosensitive channel (133 aa).

The next 2 membrane-spanning stretches (helical) occupy residues 10 to 30 and 76 to 96; these read FAMR…GAFG and GAFI…FLMI.

The protein belongs to the MscL family. Homopentamer.

It localises to the cell inner membrane. Its function is as follows. Channel that opens in response to stretch forces in the membrane lipid bilayer. May participate in the regulation of osmotic pressure changes within the cell. The sequence is that of Large-conductance mechanosensitive channel from Pasteurella multocida (strain Pm70).